A 188-amino-acid chain; its full sequence is Probable thiol:disulfide interchange protein DsbE-2 (188 aa).

The Cytoplasmic segment spans residues 1–11 (MSMLHQQKRKN). A helical membrane pass occupies residues 12 to 32 (HFVFLPLVILLAVCALLFIGL). At 33-188 (QQDPQKIASA…KLEAENAKVR (156 aa)) the chain is on the periplasmic side. The 138-residue stretch at 42–179 (ALIGKPVPTF…QEMFIPEWQK (138 aa)) folds into the Thioredoxin domain. C82 and C85 are oxidised to a cystine.

It belongs to the thioredoxin family. DsbE subfamily.

Its subcellular location is the cell inner membrane. In terms of biological role, could be involved in disulfide bond formation. Could catalyzes a late, reductive step in the assembly of periplasmic NrfA c-type cytochrome, probably the reduction of disulfide bonds of the apocytochrome c to allow covalent linkage with the heme. Possible subunit of a heme lyase. This chain is Probable thiol:disulfide interchange protein DsbE-2 (nrfX), found in Pasteurella multocida (strain Pm70).